Here is a 126-residue protein sequence, read N- to C-terminus: Fluoride-specific ion channel FluC (126 aa).

Helical transmembrane passes span 4–24 (FAIL…RYLV), 38–58 (YGTL…IAAF), 71–91 (IIGL…MDNV), and 104–124 (LNVV…FQLL). 2 residues coordinate Na(+): Gly-78 and Thr-81.

This sequence belongs to the fluoride channel Fluc/FEX (TC 1.A.43) family.

The protein localises to the cell inner membrane. The catalysed reaction is fluoride(in) = fluoride(out). Its activity is regulated as follows. Na(+) is not transported, but it plays an essential structural role and its presence is essential for fluoride channel function. Functionally, fluoride-specific ion channel. Important for reducing fluoride concentration in the cell, thus reducing its toxicity. In Vibrio vulnificus (strain CMCP6), this protein is Fluoride-specific ion channel FluC.